The following is a 367-amino-acid chain: Heparan sulfate glucosamine 3-O-sulfotransferase 2 (367 aa).

Topologically, residues 1–19 are cytoplasmic; the sequence is MAYRVLGRAGPPQPRRARR. Residues 20–39 traverse the membrane as a helical; Signal-anchor for type II membrane protein segment; it reads LLFAFTLSLSCTYLCYSFLC. Residues 40 to 367 lie on the Lumenal side of the membrane; the sequence is CCDDLGRSRL…ETVGQDFRWE (328 aa). Residues 61-110 are disordered; the sequence is AGGQKLLQKSRPCDPSGPTPSEPSAPSAPAAAVPAPRLSGSNHSGSPKLG. Low complexity predominate over residues 84–96; that stretch reads SAPSAPAAAVPAP. N-linked (GlcNAc...) asparagine glycosylation is present at asparagine 102. 124–128 serves as a coordination point for 3'-phosphoadenylyl sulfate; sequence KGGTR. Residues 146–152 and 177–180 contribute to the substrate site; these read EPHFFDR and KTPS. N-linked (GlcNAc...) asparagine glycosylation is present at asparagine 193. 3'-phosphoadenylyl sulfate contacts are provided by arginine 205 and serine 213. N-linked (GlcNAc...) asparagine glycosylation occurs at asparagine 235. 245–246 is a binding site for substrate; the sequence is WN. Residue asparagine 306 is glycosylated (N-linked (GlcNAc...) asparagine). Cysteine 313 and cysteine 325 form a disulfide bridge. 330 to 334 contacts 3'-phosphoadenylyl sulfate; sequence KGRTH.

It belongs to the sulfotransferase 1 family. Highly expressed in the brain and weakly expressed in the heart, placenta, lung and skeletal muscle.

It localises to the golgi apparatus membrane. The catalysed reaction is alpha-D-glucosaminyl-[heparan sulfate](n) + 3'-phosphoadenylyl sulfate = 3-sulfo-alpha-D-glucosaminyl-[heparan sulfate](n) + adenosine 3',5'-bisphosphate + H(+). Functionally, sulfotransferase that utilizes 3'-phospho-5'-adenylyl sulfate (PAPS) to catalyze the transfer of a sulfo group to an N-unsubstituted glucosamine linked to a 2-O-sulfo iduronic acid unit on heparan sulfate. Catalyzes the O-sulfation of glucosamine in GlcA2S-GlcNS. Unlike HS3ST1/3-OST-1, does not convert non-anticoagulant heparan sulfate to anticoagulant heparan sulfate. The sequence is that of Heparan sulfate glucosamine 3-O-sulfotransferase 2 (HS3ST2) from Homo sapiens (Human).